The sequence spans 230 residues: MRVSSAIFTIASGIAAVSAADCAAAGDYDSQGRYSCNPAHQYPNGQSCKTIDGCPLLADASGQPIYKSTCAAPGDYDDKGRYSCNPAHQYPNGQSCKTVEGCPLLVDANGQPIVKATGTSTGTGTVTVTSSAAAQPTSTGTPSSKCAAPGDYDSKGRYSCNPAHQYPNGQTCKVIDNCPLLCDASGKPIVKATGTGSGNNGKPTDLPIVGAGSVLTGGMAMVAAAVVAAI.

Positions 1-19 (MRVSSAIFTIASGIAAVSA) are cleaved as a signal peptide.

It is found in the vacuole. In terms of biological role, vacuolar protein required for aerial conidiation and conidial maturation. Also involved in blastospore production and cell cycle. Plays a vital role in the secretion of Pr1 proteases for cuticular penetration and hence contributes significantly to host infection and virulence. The protein is Vacuole-localized protein 4 of Beauveria bassiana (strain ARSEF 2860) (White muscardine disease fungus).